The primary structure comprises 184 residues: NADH-quinone oxidoreductase subunit B (184 aa).

[4Fe-4S] cluster-binding residues include C63, C64, C128, and C158.

Belongs to the complex I 20 kDa subunit family. As to quaternary structure, NDH-1 is composed of 14 different subunits. Subunits NuoB, C, D, E, F, and G constitute the peripheral sector of the complex. The cofactor is [4Fe-4S] cluster.

It is found in the cell inner membrane. The catalysed reaction is a quinone + NADH + 5 H(+)(in) = a quinol + NAD(+) + 4 H(+)(out). In terms of biological role, NDH-1 shuttles electrons from NADH, via FMN and iron-sulfur (Fe-S) centers, to quinones in the respiratory chain. The immediate electron acceptor for the enzyme in this species is believed to be ubiquinone. Couples the redox reaction to proton translocation (for every two electrons transferred, four hydrogen ions are translocated across the cytoplasmic membrane), and thus conserves the redox energy in a proton gradient. The protein is NADH-quinone oxidoreductase subunit B of Xylella fastidiosa (strain M23).